A 54-amino-acid chain; its full sequence is Soricidin (54 aa).

3 disulfide bridges follow: C2/C23, C6/C27, and C9/C41.

Belongs to the opioid neuropeptide precursor family. As to quaternary structure, member of a multiprotein complex. In terms of tissue distribution, salivary gland.

Its subcellular location is the secreted. In terms of biological role, paralytic toxin that immobilizes a mealworm for 7 days. Inhibits the transient receptor potential cation channel subfamily V member 6 (TRPV6). The sequence is that of Soricidin from Blarina brevicauda (Northern short-tailed shrew).